The sequence spans 275 residues: MEFQLLLLCSVWALGVCAEQEVENLSGLSTNPERDIFVVRENGTTCLMAEFAVRFLIPYDVLALNGIDLITEQTSVAIPRGAQIAGKCGPSESELQISWAAQAFNFHIYFSKEKRVQGSDGKAPEAEVWKINRVQLVYDTSENTHFINAYNPGKHTASTHRLSALVTPAGRSYVCAAQQTLTLISSDHQKGVTVSIYDIQIQPFDINADFVFSEPYKCVTDQREQLEQTLPLVLGLILGLIIVITISVYHFHLKLNAAHTQQPTLPRDRSLYKNM.

An N-terminal signal peptide occupies residues methionine 1–alanine 18. Topologically, residues glutamate 19–glutamine 228 are extracellular. 2 N-linked (GlcNAc...) asparagine glycosylation sites follow: asparagine 24 and asparagine 42. The chain crosses the membrane as a helical span at residues threonine 229–tyrosine 249. Over histidine 250–methionine 275 the chain is Cytoplasmic.

This sequence belongs to the LAMP family. In terms of processing, glycosylated.

The protein resides in the cytoplasmic vesicle membrane. It is found in the cell membrane. Its subcellular location is the cell projection. It localises to the dendrite. The protein localises to the cytoplasmic vesicle. The protein resides in the secretory vesicle. It is found in the synaptic vesicle membrane. Its subcellular location is the growth cone membrane. It localises to the early endosome membrane. The protein localises to the recycling endosome. The protein resides in the endoplasmic reticulum-Golgi intermediate compartment membrane. It is found in the endosome membrane. Functionally, plays a role in short-term synaptic plasticity in a subset of GABAergic neurons in the brain. The sequence is that of Lysosome-associated membrane glycoprotein 5 (lamp5) from Danio rerio (Zebrafish).